Consider the following 603-residue polypeptide: Glutathione-regulated potassium-efflux system protein KefB (603 aa).

Helical transmembrane passes span 5–25, 29–49, 55–75, 87–107, 115–135, 152–172, 180–202, 207–227, 230–250, 268–288, 291–311, 326–346, and 356–376; these read ALLT…PIAA, IGAV…GLGF, AILH…GLEL, IFGV…GALY, SALI…LQLM, VLLF…ILAG, WERI…YLVR, FIAA…LVLG, LFME…GILL, GLLL…GILY, IVKI…VLYF, FAGV…AAAS, and PLLL…MQLI. The region spanning 400–521 is the RCK N-terminal domain; sequence EPQVIVVGFG…VRHFSRETFS (122 aa).

The protein belongs to the monovalent cation:proton antiporter 2 (CPA2) transporter (TC 2.A.37) family. KefB subfamily. As to quaternary structure, interacts with the regulatory subunit KefG.

The protein resides in the cell inner membrane. In terms of biological role, pore-forming subunit of a potassium efflux system that confers protection against electrophiles. Catalyzes K(+)/H(+) antiport. The sequence is that of Glutathione-regulated potassium-efflux system protein KefB from Pectobacterium carotovorum subsp. carotovorum (strain PC1).